The chain runs to 583 residues: Tetratricopeptide repeat protein 39C (583 aa).

Residues 1 to 22 (MAGSEQQRPRRRDDGDSDAAAA) are disordered. TPR repeat units lie at residues 315–348 (SLFM…AVDQ), 353–386 (HVCL…SRWS), and 485–518 (GLKY…ELCR).

Belongs to the TTC39 family.

The chain is Tetratricopeptide repeat protein 39C (TTC39C) from Homo sapiens (Human).